The sequence spans 525 residues: GMP synthase [glutamine-hydrolyzing] (525 aa).

In terms of domain architecture, Glutamine amidotransferase type-1 spans 3-200; sequence KILILDFGSQ…VLHVAGCKPS (198 aa). C79 serves as the catalytic Nucleophile. Residues H174 and E176 contribute to the active site. Positions 201 to 393 constitute a GMPS ATP-PPase domain; that stretch reads WTMPNYIDEA…LGLPHDMVYR (193 aa). 228–234 serves as a coordination point for ATP; the sequence is SGGVDSS.

Homodimer.

It catalyses the reaction XMP + L-glutamine + ATP + H2O = GMP + L-glutamate + AMP + diphosphate + 2 H(+). It participates in purine metabolism; GMP biosynthesis; GMP from XMP (L-Gln route): step 1/1. Its function is as follows. Catalyzes the synthesis of GMP from XMP. This Chromobacterium violaceum (strain ATCC 12472 / DSM 30191 / JCM 1249 / CCUG 213 / NBRC 12614 / NCIMB 9131 / NCTC 9757 / MK) protein is GMP synthase [glutamine-hydrolyzing].